The primary structure comprises 229 residues: Flagellar brake protein YcgR (229 aa).

The region spanning Q134–D218 is the PilZ domain.

This sequence belongs to the YcgR family. Monomer. Interacts with the flagellar basal bodies.

It localises to the bacterial flagellum basal body. Its function is as follows. Acts as a flagellar brake, regulating swimming and swarming in a bis-(3'-5') cyclic diguanylic acid (c-di-GMP)-dependent manner. Binds 1 c-di-GMP dimer per subunit. Increasing levels of c-di-GMP lead to decreased motility. This Methylibium petroleiphilum (strain ATCC BAA-1232 / LMG 22953 / PM1) protein is Flagellar brake protein YcgR.